We begin with the raw amino-acid sequence, 326 residues long: 3-dehydrosphinganine reductase TSC10A (326 aa).

The Lumenal portion of the chain corresponds to 1 to 7 (MAAISPL). Residues 8-28 (FLLFLIPIIPLSLLAILALIV) traverse the membrane as a helical segment. At 29–264 (RPRPIKIPIK…KAMDGIKAGN (236 aa)) the chain is on the cytoplasmic side. Glycine 46, serine 48, serine 49, glycine 50, arginine 71, lysine 75, and aspartate 97 together coordinate NADPH. A GXSXG motif is present at residues 46–50 (GGSSG). Catalysis depends on serine 174, which acts as the Proton donor. Tyrosine 188 acts as the Proton acceptor in catalysis. Residues tyrosine 188 and lysine 192 each coordinate NADP(+). Lysine 192 serves as the catalytic Lowers pKa of active site Tyr. The helical transmembrane segment at 265-285 (FTVSCNFEGFLLSLATTGMSP) threads the bilayer. Residues 286–288 (QRS) lie on the Lumenal side of the membrane. A helical transmembrane segment spans residues 289-309 (FWLAFLEVITAGPIRLIALFF). Residues 310–326 (QWDWYKAIEKWSKTKTK) are Cytoplasmic-facing.

Belongs to the short-chain dehydrogenases/reductases (SDR) family. As to expression, expressed in roots, leaves, stems, flowers and siliques.

The protein resides in the endoplasmic reticulum membrane. It catalyses the reaction sphinganine + NADP(+) = 3-oxosphinganine + NADPH + H(+). It participates in lipid metabolism; sphingolipid metabolism. Functionally, catalyzes the reduction of 3'-oxosphinganine (3-ketodihydrosphingosine/KDS) to sphinganine (dihydrosphingosine/DHS), the second step of de novo sphingolipid biosynthesis. In plants, sphingolipids seems to play a critical role in mineral ion homeostasis, most likely through their involvement in the ion transport functionalities of membrane systems in the root. Lacks stereospecificity and can also produce L-threo-DHS in addition to D-erythro-DHS. This Arabidopsis thaliana (Mouse-ear cress) protein is 3-dehydrosphinganine reductase TSC10A (TSC10A).